A 672-amino-acid polypeptide reads, in one-letter code: Glycogen [starch] synthase (672 aa).

Position 56 (lysine 56) interacts with UDP-alpha-D-glucose. The disordered stretch occupies residues 645–672 (MRDNEGKVPSAATSRRPSIHSSDGEDDE). A compositionally biased stretch (polar residues) spans 655–665 (AATSRRPSIHS).

Belongs to the glycosyltransferase 3 family. In terms of assembly, forms a hetero-octamer with each protomer of the gsy-1 homotetramer bound to one molecule of gyg-1. The N-terminus is involved in interprotomer contacts with gyg-1. The interaction with gyg-1 is required for glycogen production but is not required for gsy-1 intrinsic activity.

It catalyses the reaction [(1-&gt;4)-alpha-D-glucosyl](n) + UDP-alpha-D-glucose = [(1-&gt;4)-alpha-D-glucosyl](n+1) + UDP + H(+). The protein operates within glycan biosynthesis; glycogen biosynthesis. Its function is as follows. Transfers the glycosyl residue from UDP-Glc to the non-reducing end of alpha-1,4-glucan. The chain is Glycogen [starch] synthase from Caenorhabditis elegans.